Consider the following 372-residue polypeptide: Type II methyltransferase M1.HphI (372 aa).

In terms of domain architecture, SAM-dependent MTase C5-type spans 45–372; it reads LTYIDLFSGA…EAVLKMNTNE (328 aa). Residue cysteine 122 is part of the active site.

The protein belongs to the class I-like SAM-binding methyltransferase superfamily. C5-methyltransferase family.

It carries out the reaction a 2'-deoxycytidine in DNA + S-adenosyl-L-methionine = a 5-methyl-2'-deoxycytidine in DNA + S-adenosyl-L-homocysteine + H(+). Its function is as follows. A methylase that recognizes the double-stranded sequence 5'-GGTGA-3' and protects the DNA from cleavage by the HphI endonuclease. Probably methylates C-2 on the bottom strand. The protein is Type II methyltransferase M1.HphI (hphIAM) of Haemophilus parahaemolyticus.